A 139-amino-acid polypeptide reads, in one-letter code: D-ribose pyranase (139 aa).

His-20 serves as the catalytic Proton donor. Residues Asp-28, His-106, and 128 to 130 each bind substrate; that span reads YAN.

This sequence belongs to the RbsD / FucU family. RbsD subfamily. As to quaternary structure, homodecamer.

It localises to the cytoplasm. The catalysed reaction is beta-D-ribopyranose = beta-D-ribofuranose. The protein operates within carbohydrate metabolism; D-ribose degradation; D-ribose 5-phosphate from beta-D-ribopyranose: step 1/2. Functionally, catalyzes the interconversion of beta-pyran and beta-furan forms of D-ribose. The chain is D-ribose pyranase from Shewanella halifaxensis (strain HAW-EB4).